The sequence spans 344 residues: Protein RecA (344 aa).

65–72 lines the ATP pocket; sequence GPESSGKT.

Belongs to the RecA family.

The protein localises to the cytoplasm. Functionally, can catalyze the hydrolysis of ATP in the presence of single-stranded DNA, the ATP-dependent uptake of single-stranded DNA by duplex DNA, and the ATP-dependent hybridization of homologous single-stranded DNAs. It interacts with LexA causing its activation and leading to its autocatalytic cleavage. The polypeptide is Protein RecA (Xanthomonas oryzae pv. oryzae (strain PXO99A)).